The sequence spans 238 residues: Glutamine amidotransferase-like protein chyE (238 aa).

The Glutamine amidotransferase type-1 domain maps to lysine 8–glutamate 238. Catalysis depends on cysteine 102, which acts as the Nucleophile. Residues histidine 189 and glutamate 191 contribute to the active site.

The protein belongs to the peptidase C26 family.

Its pathway is pigment biosynthesis. Glutamine amidotransferase-like protein; part of the gene cluster that mediates the biosynthesis of the yellow pigment chrysogine. the NRPS chyA mediates the condensation of anthranilic acid and alanine into the intermediate 2-(2-aminopropanamido)benzoic acid. The remainder of the pathway is highly branched yielding at least 13 chrysogine-related compounds. The malonyl transferase chyE converts 2-(2-aminopropanamido)benzoic acid and 2-(2-aminopropanamido)benzamidine into 2-(2-(2-carboxyacetamido)propanamido)benzoic acid and 3-((1-((2-carbamoylphenyl)amino)-1-oxopropan-2-yl)amino)-3-oxopropanoic acid, respectively. ChyD is an amidase, being responsible for the amidation of the carboxylic acid moiety of 2-(2-aminopropanamido)benzoic acid, 2-(2-(2-carboxyacetamido)propanamido)benzoic acid and 2-(2-((4-amino-1-carboxy-4-oxobutyl)amino)propanamido)benzoic acid. ChyC is involved in the same reactions as ChyD, but plays a more minor role in the amidation reactions compared to chyD. The oxidoreductases chyH and chyM are involved in oxidation reactions that form N-pyruvoylanthranilamide from 2-(2-aminopropanamido)benzamidine and (1-((2-carbamoylphenyl)amino)-1-oxopropan-2-yl)glutamine, respectively. N-pyruvoylanthranilamide is further converted via two further branches in the pathway, yielding chrysogine and additional chrysogine-related coumpounds. Chrysogine is likely formed by a spontaneous ring closure from N-pyruvoylanthranilamide. The protein is Glutamine amidotransferase-like protein chyE of Penicillium rubens (strain ATCC 28089 / DSM 1075 / NRRL 1951 / Wisconsin 54-1255) (Penicillium chrysogenum).